The chain runs to 385 residues: Putative type I restriction enzyme specificity subunit S.HindORF215P (385 aa).

The protein belongs to the type-I restriction system S methylase family.

Its function is as follows. A putative specificity subunit for a type I restriction enzyme; the corresponding endonuclease and methylase subunits have multiple frameshifts and are probably not expressed. The polypeptide is Putative type I restriction enzyme specificity subunit S.HindORF215P (Haemophilus influenzae (strain ATCC 51907 / DSM 11121 / KW20 / Rd)).